The primary structure comprises 405 residues: Argininosuccinate synthase (405 aa).

ATP-binding positions include 10 to 18 (AYSGGLDTS) and Ala37. Residues Tyr88 and Ser93 each contribute to the L-citrulline site. Gly118 serves as a coordination point for ATP. L-aspartate contacts are provided by Thr120, Asn124, and Asp125. Asn124 contributes to the L-citrulline binding site. L-citrulline is bound by residues Arg128, Ser179, Ser188, Glu264, and Tyr276.

This sequence belongs to the argininosuccinate synthase family. Type 1 subfamily. Homotetramer.

The protein localises to the cytoplasm. It carries out the reaction L-citrulline + L-aspartate + ATP = 2-(N(omega)-L-arginino)succinate + AMP + diphosphate + H(+). It participates in amino-acid biosynthesis; L-arginine biosynthesis; L-arginine from L-ornithine and carbamoyl phosphate: step 2/3. The chain is Argininosuccinate synthase from Pseudomonas entomophila (strain L48).